We begin with the raw amino-acid sequence, 1363 residues long: Vascular endothelial growth factor receptor 3 (1363 aa).

The first 24 residues, M1–G24, serve as a signal peptide directing secretion. The Extracellular segment spans residues Y25–E775. Residues N33, N104, N166, N251, N299, and N411 are each glycosylated (N-linked (GlcNAc...) asparagine). Ig-like C2-type domains lie at G44–A118, K151–Q213, Y230–I326, P331–E415, P422–T552, P555–S671, and P678–A764. 2 disulfides stabilise this stretch: C51–C111 and C158–C206. C252 and C310 are oxidised to a cystine. 3 disulfide bridges follow: C445–C534, C466–C486, and C578–C653. N-linked (GlcNAc...) asparagine glycosylation is found at N515, N527, N582, N594, N683, and N690. C699 and C751 form a disulfide bridge. N758 carries N-linked (GlcNAc...) asparagine glycosylation. Residues I776–I796 traverse the membrane as a helical segment. Residues F797–Y1363 are Cytoplasmic-facing. Residues Y830 and Y833 each carry the phosphotyrosine; by SRC modification. Positions L845–L1173 constitute a Protein kinase domain. ATP is bound by residues L851–V859 and K879. Residue D1037 is the Proton acceptor of the active site. A Phosphotyrosine; by autocatalysis and SRC modification is found at Y1063. Phosphotyrosine; by autocatalysis occurs at positions 1068, 1230, 1231, and 1265. The tract at residues E1288–K1330 is disordered. The segment covering D1307 to G1317 has biased composition (basic and acidic residues). A phosphotyrosine; by autocatalysis and SRC mark is found at Y1333 and Y1337. The residue at position 1363 (Y1363) is a Phosphotyrosine; by autocatalysis.

It belongs to the protein kinase superfamily. Tyr protein kinase family. CSF-1/PDGF receptor subfamily. Interacts with VEGFC and VEGFD. Monomer in the absence of bound VEGFC or VEGFD. Homodimer in the presence of bound VEGFC or VEGFD. Can also form a heterodimer with KDR. Interacts with PTPN14; the interaction is enhanced by stimulation with VEGFC. Interacts with CRK, GRB2, PTK2/FAK1, SHC1, PIK3R1 and PTPN11/SHP-2. Identified in a complex with SRC and ITGB1. In terms of processing, autophosphorylated on tyrosine residues upon ligand binding. Autophosphorylation occurs in trans, i.e. one subunit of the dimeric receptor phosphorylates tyrosine residues on the other subunit. Phosphorylation in response to H(2)O(2) is mediated by a process that requires SRC and PRKCD activity. Phosphorylation at Tyr-1068 is required for autophosphorylation at additional tyrosine residues. Phosphorylation at Tyr-1063 and Tyr-1337 is important for interaction with CRK and subsequent activation of MAPK8. Phosphorylation at Tyr-1230, Tyr-1231 and Tyr-1337 is important for interaction with GRB2 and subsequent activation of the AKT1 and MAPK1/ERK2 and/or MAPK3/ERK1 signaling pathways. In response to endothelial cell adhesion onto collagen, can also be phosphorylated in the absence of FLT4 kinase activity by SRC. In terms of tissue distribution, expressed in adult lung and liver, and in fetal liver, brain, intestine and placenta.

The protein resides in the cell membrane. The protein localises to the cytoplasm. It is found in the nucleus. It carries out the reaction L-tyrosyl-[protein] + ATP = O-phospho-L-tyrosyl-[protein] + ADP + H(+). Present in an inactive conformation in the absence of bound ligand. Binding of VEGFC or VEGFD leads to dimerization and activation by autophosphorylation on tyrosine residues. Its function is as follows. Tyrosine-protein kinase that acts as a cell-surface receptor for VEGFC and VEGFD, and plays an essential role in adult lymphangiogenesis and in the development of the vascular network and the cardiovascular system during embryonic development. Promotes proliferation, survival and migration of endothelial cells, and regulates angiogenic sprouting. Signaling by activated FLT4 leads to enhanced production of VEGFC, and to a lesser degree VEGFA, thereby creating a positive feedback loop that enhances FLT4 signaling. Modulates KDR signaling by forming heterodimers. Mediates activation of the MAPK1/ERK2, MAPK3/ERK1 signaling pathway, of MAPK8 and the JUN signaling pathway, and of the AKT1 signaling pathway. Phosphorylates SHC1. Mediates phosphorylation of PIK3R1, the regulatory subunit of phosphatidylinositol 3-kinase. Promotes phosphorylation of MAPK8 at 'Thr-183' and 'Tyr-185', and of AKT1 at 'Ser-473'. This chain is Vascular endothelial growth factor receptor 3 (Flt4), found in Mus musculus (Mouse).